The chain runs to 221 residues: 7-carboxy-7-deazaguanine synthase (221 aa).

Substrate-binding positions include 12–14 (ING) and Arg-27. Residues 18 to 216 (KSGQLSVFIR…IQIHKIIWNP (199 aa)) enclose the Radical SAM core domain. Residues Cys-31, Cys-35, and Cys-38 each contribute to the [4Fe-4S] cluster site. Thr-40 contributes to the Mg(2+) binding site. Residue Thr-73 participates in substrate binding. Gly-75 provides a ligand contact to S-adenosyl-L-methionine.

It belongs to the radical SAM superfamily. 7-carboxy-7-deazaguanine synthase family. In terms of assembly, homodimer. The cofactor is [4Fe-4S] cluster. S-adenosyl-L-methionine is required as a cofactor. Mg(2+) serves as cofactor.

The enzyme catalyses 6-carboxy-5,6,7,8-tetrahydropterin + H(+) = 7-carboxy-7-deazaguanine + NH4(+). It functions in the pathway purine metabolism; 7-cyano-7-deazaguanine biosynthesis. Functionally, catalyzes the complex heterocyclic radical-mediated conversion of 6-carboxy-5,6,7,8-tetrahydropterin (CPH4) to 7-carboxy-7-deazaguanine (CDG), a step common to the biosynthetic pathways of all 7-deazapurine-containing compounds. This Clostridium acetobutylicum (strain ATCC 824 / DSM 792 / JCM 1419 / IAM 19013 / LMG 5710 / NBRC 13948 / NRRL B-527 / VKM B-1787 / 2291 / W) protein is 7-carboxy-7-deazaguanine synthase.